A 455-amino-acid polypeptide reads, in one-letter code: Maintenance of telomere capping protein 1 (455 aa).

Disordered stretches follow at residues 1-113 (MAET…SATP) and 296-317 (AKKMNKENKQENVGAGDDEDAS). Positions 27–38 (PTSKEFNNDDSK) are enriched in basic and acidic residues. The segment covering 80–113 (VAATSNERQQHDASNQPSQAAQTTINKNTESATP) has biased composition (polar residues). Basic and acidic residues predominate over residues 296 to 305 (AKKMNKENKQ).

It belongs to the MTC1 family.

The protein localises to the cytoplasm. Its function is as follows. Involved in telomere capping. This is Maintenance of telomere capping protein 1 from Schizosaccharomyces pombe (strain 972 / ATCC 24843) (Fission yeast).